The following is a 938-amino-acid chain: Isoleucine--tRNA ligase (938 aa).

A 'HIGH' region motif is present at residues 58 to 68 (PYANGSIHIGH). N6-acetyllysine is present on K183. E561 is a binding site for L-isoleucyl-5'-AMP. A 'KMSKS' region motif is present at residues 602 to 606 (KMSKS). K605 lines the ATP pocket. 4 residues coordinate Zn(2+): C901, C904, C921, and C924.

The protein belongs to the class-I aminoacyl-tRNA synthetase family. IleS type 1 subfamily. In terms of assembly, monomer. The cofactor is Zn(2+).

It is found in the cytoplasm. It catalyses the reaction tRNA(Ile) + L-isoleucine + ATP = L-isoleucyl-tRNA(Ile) + AMP + diphosphate. In terms of biological role, catalyzes the attachment of isoleucine to tRNA(Ile). As IleRS can inadvertently accommodate and process structurally similar amino acids such as valine, to avoid such errors it has two additional distinct tRNA(Ile)-dependent editing activities. One activity is designated as 'pretransfer' editing and involves the hydrolysis of activated Val-AMP. The other activity is designated 'posttransfer' editing and involves deacylation of mischarged Val-tRNA(Ile). This chain is Isoleucine--tRNA ligase, found in Escherichia coli (strain 55989 / EAEC).